Here is a 338-residue protein sequence, read N- to C-terminus: Glyceraldehyde-3-phosphate dehydrogenase GAPC2, cytosolic (338 aa).

Residues 15–16 (RI), D37, and R84 contribute to the NAD(+) site. Residue 155-157 (SCT) participates in D-glyceraldehyde 3-phosphate binding. C156 acts as the Nucleophile in catalysis. C156 is subject to S-glutathionyl cysteine; transient; alternate. The residue at position 156 (C156) is an S-nitrosocysteine; transient; alternate. C160 carries the post-translational modification S-nitrosocysteine; transient. D-glyceraldehyde 3-phosphate-binding positions include T186, 215 to 216 (TG), and R238. N320 serves as a coordination point for NAD(+).

This sequence belongs to the glyceraldehyde-3-phosphate dehydrogenase family. In terms of assembly, homotetramer. Interacts with PLDDELTA. Binds to DPB3-1/NF-YC10 in response to heat-stress; this interaction promotes DPB3-1/NF-YC10 DNA-binding ability to its target promoter. In terms of processing, S-glutathionylation at Cys-156 in the presence of oxidized glutathione (GSSG). S-nitrosylation at Cys-156 and Cys-160 in the presence of S-nitrosoglutathione (GSNO) or sodium nitroprusside (SNP). These reactions may be both a protective mechanism against irreversible oxidation and a mean to store inhibited enzyme in a recoverable form.

It localises to the cytoplasm. The protein resides in the nucleus. The enzyme catalyses D-glyceraldehyde 3-phosphate + phosphate + NAD(+) = (2R)-3-phospho-glyceroyl phosphate + NADH + H(+). Its pathway is carbohydrate degradation; glycolysis; pyruvate from D-glyceraldehyde 3-phosphate: step 1/5. Its activity is regulated as follows. Inhibition by oxidized glutathione (GSSG), S-nitrosoglutathione (GSNO) and hydrogen peroxide. In terms of biological role, key enzyme in glycolysis that catalyzes the first step of the pathway by converting D-glyceraldehyde 3-phosphate (G3P) into 3-phospho-D-glyceroyl phosphate. Essential for the maintenance of cellular ATP levels and carbohydrate metabolism. Binds DNA in vitro. Together with DNA polymerase II subunit B3-1 (DPB3-1) and GAPC1, enhances heat tolerance and promotes the expression of heat-inducible genes. The chain is Glyceraldehyde-3-phosphate dehydrogenase GAPC2, cytosolic from Arabidopsis thaliana (Mouse-ear cress).